An 82-amino-acid polypeptide reads, in one-letter code: Translational regulator CsrA (82 aa).

The protein belongs to the CsrA/RsmA family. As to quaternary structure, homodimer; the beta-strands of each monomer intercalate to form a hydrophobic core, while the alpha-helices form wings that extend away from the core.

It is found in the cytoplasm. A translational regulator that binds mRNA to regulate translation initiation and/or mRNA stability. Usually binds in the 5'-UTR at or near the Shine-Dalgarno sequence preventing ribosome-binding, thus repressing translation. Its main target seems to be the major flagellin gene, while its function is anatagonized by FliW. This chain is Translational regulator CsrA, found in Geobacillus kaustophilus (strain HTA426).